The primary structure comprises 379 residues: Cytochrome b (379 aa).

4 helical membrane passes run 33-53 (FGSLLGMCLVIQILTGLFLAM), 77-98 (WLIRYLHANGASMFFICLFIHV), 113-133 (WNIGIILFLTTMATAFVGYVL), and 178-198 (FFAFHFILPFIIAAFALVHLL). Positions 83 and 97 each coordinate heme b. Positions 182 and 196 each coordinate heme b. An a ubiquinone-binding site is contributed by His-201. 4 consecutive transmembrane segments (helical) span residues 226-246 (TKDLLGIFLLLLVLMILALFF), 288-308 (LGGVLALILSILILAAFPLLN), 320-340 (VTQVIYWXXIANLLVLTWIGG), and 347-367 (FTMIGQIASITYFAIXIILIP).

This sequence belongs to the cytochrome b family. In terms of assembly, the cytochrome bc1 complex contains 11 subunits: 3 respiratory subunits (MT-CYB, CYC1 and UQCRFS1), 2 core proteins (UQCRC1 and UQCRC2) and 6 low-molecular weight proteins (UQCRH/QCR6, UQCRB/QCR7, UQCRQ/QCR8, UQCR10/QCR9, UQCR11/QCR10 and a cleavage product of UQCRFS1). This cytochrome bc1 complex then forms a dimer. It depends on heme b as a cofactor.

Its subcellular location is the mitochondrion inner membrane. Functionally, component of the ubiquinol-cytochrome c reductase complex (complex III or cytochrome b-c1 complex) that is part of the mitochondrial respiratory chain. The b-c1 complex mediates electron transfer from ubiquinol to cytochrome c. Contributes to the generation of a proton gradient across the mitochondrial membrane that is then used for ATP synthesis. The sequence is that of Cytochrome b (MT-CYB) from Akodon lutescens puer (Altiplano grass mouse).